The chain runs to 208 residues: Thymidylate kinase (208 aa).

ATP is bound at residue 10-17 (GGEGVGKS).

It belongs to the thymidylate kinase family.

The catalysed reaction is dTMP + ATP = dTDP + ADP. In terms of biological role, phosphorylation of dTMP to form dTDP in both de novo and salvage pathways of dTTP synthesis. This Rhizorhabdus wittichii (strain DSM 6014 / CCUG 31198 / JCM 15750 / NBRC 105917 / EY 4224 / RW1) (Sphingomonas wittichii) protein is Thymidylate kinase.